The primary structure comprises 378 residues: tRNA N(3)-cytidine methyltransferase METTL2 (378 aa).

Residues Trp78, Tyr82, Gly188, Asp213, Asp239, Leu240, and Ile260 each contribute to the S-adenosyl-L-methionine site.

Belongs to the methyltransferase superfamily. METL family. In terms of assembly, monomer. Interacts with DALRD3.

It is found in the cytoplasm. The catalysed reaction is cytidine(32) in tRNA(Thr) + S-adenosyl-L-methionine = N(3)-methylcytidine(32) in tRNA(Thr) + S-adenosyl-L-homocysteine + H(+). It catalyses the reaction cytidine(32) in tRNA(Arg)(CCU) + S-adenosyl-L-methionine = N(3)-methylcytidine(32) in tRNA(Arg)(CCU) + S-adenosyl-L-homocysteine + H(+). Functionally, S-adenosyl-L-methionine-dependent methyltransferase that mediates N(3)-methylcytidine modification of residue 32 of the tRNA anticodon loop of tRNA(Thr)(UGU) and tRNA(Arg)(CCU). N(3)-methylcytidine methylation by METTL2 requires the N6-threonylcarbamoylation of tRNA (t6A37) by the EKC/KEOPS complex as prerequisite. The polypeptide is tRNA N(3)-cytidine methyltransferase METTL2 (METTL2) (Bos taurus (Bovine)).